We begin with the raw amino-acid sequence, 481 residues long: OTU domain-containing protein 1 (481 aa).

Disordered stretches follow at residues 18-60 and 202-282; these read PTAA…AAAE and LAAA…IVSR. Residues 38–58 show a composition bias toward low complexity; the sequence is PPGAAGAAPEPETGECQPAAA. Basic and acidic residues predominate over residues 225 to 257; that stretch reads GEEHLAERGPRGWERGGDRCDAPGGDAARRPDP. Over residues 261–281 the composition is skewed to low complexity; that stretch reads APPAGSIEAAPSSAAEPVIVS. Residues 309-438 enclose the OTU domain; sequence KYRFHIIPDG…NGHYDAVFDH (130 aa). The interval 314–320 is cys-loop; sequence IIPDGNC. Asp-317 is a catalytic residue. Cys-320 (nucleophile) is an active-site residue. The interval 369–379 is his-loop; that stretch reads AAQDGAWAGYP. The tract at residues 426–431 is variable-loop; the sequence is WLSNGH. Residue His-431 is part of the active site. Residues 457–476 form the UIM domain; the sequence is KRDEELAKSMAISLSKMYIE.

It catalyses the reaction Thiol-dependent hydrolysis of ester, thioester, amide, peptide and isopeptide bonds formed by the C-terminal Gly of ubiquitin (a 76-residue protein attached to proteins as an intracellular targeting signal).. Functionally, deubiquitinating enzyme that specifically hydrolyzes 'Lys-63'-linked polyubiquitin to monoubiquitin. Required for the stability and translation of a subset mRNAs with a high abundance of rare codons by mediating deubiquitination of 40S ribosomal protein RPS10/eS10, thereby antagonizing ZNF598-mediated 40S ubiquitination. The abundance of rare codons in mRNAs can limit the translation rate and can lead to ribosome collisions that trigger activation of ribosome quality control (RQC) pathway by ZNF598. OTUD1-mediated deubiquitination prevents activation of the RQC and subsequent dissociation of ribosomes and stimulates formation of polysomes and translation. In Homo sapiens (Human), this protein is OTU domain-containing protein 1.